Reading from the N-terminus, the 304-residue chain is Lipoyl synthase (304 aa).

7 residues coordinate [4Fe-4S] cluster: C41, C46, C52, C68, C72, C75, and S281. The Radical SAM core domain occupies 54-270; that stretch reads GARRTATFMI…RKIAMEKGFK (217 aa). A disordered region spans residues 282–304; that stretch reads YHADEQVNEAAKEKQRQGEEQLN.

It belongs to the radical SAM superfamily. Lipoyl synthase family. The cofactor is [4Fe-4S] cluster.

It is found in the cytoplasm. It catalyses the reaction [[Fe-S] cluster scaffold protein carrying a second [4Fe-4S](2+) cluster] + N(6)-octanoyl-L-lysyl-[protein] + 2 oxidized [2Fe-2S]-[ferredoxin] + 2 S-adenosyl-L-methionine + 4 H(+) = [[Fe-S] cluster scaffold protein] + N(6)-[(R)-dihydrolipoyl]-L-lysyl-[protein] + 4 Fe(3+) + 2 hydrogen sulfide + 2 5'-deoxyadenosine + 2 L-methionine + 2 reduced [2Fe-2S]-[ferredoxin]. Its pathway is protein modification; protein lipoylation via endogenous pathway; protein N(6)-(lipoyl)lysine from octanoyl-[acyl-carrier-protein]. Catalyzes the radical-mediated insertion of two sulfur atoms into the C-6 and C-8 positions of the octanoyl moiety bound to the lipoyl domains of lipoate-dependent enzymes, thereby converting the octanoylated domains into lipoylated derivatives. The polypeptide is Lipoyl synthase (Staphylococcus epidermidis (strain ATCC 35984 / DSM 28319 / BCRC 17069 / CCUG 31568 / BM 3577 / RP62A)).